An 876-amino-acid chain; its full sequence is Valine--tRNA ligase (876 aa).

A 'HIGH' region motif is present at residues 44-54 (PNVTGKLHLGH). The 'KMSKS' region motif lies at 520–524 (KMSKS). Lys-523 contacts ATP. Residues 805 to 876 (LEGLIDMDKE…VKARIEQLKA (72 aa)) adopt a coiled-coil conformation.

This sequence belongs to the class-I aminoacyl-tRNA synthetase family. ValS type 1 subfamily. As to quaternary structure, monomer.

The protein resides in the cytoplasm. It carries out the reaction tRNA(Val) + L-valine + ATP = L-valyl-tRNA(Val) + AMP + diphosphate. Functionally, catalyzes the attachment of valine to tRNA(Val). As ValRS can inadvertently accommodate and process structurally similar amino acids such as threonine, to avoid such errors, it has a 'posttransfer' editing activity that hydrolyzes mischarged Thr-tRNA(Val) in a tRNA-dependent manner. The protein is Valine--tRNA ligase of Staphylococcus aureus (strain JH1).